The following is a 492-amino-acid chain: N-succinylglutamate 5-semialdehyde dehydrogenase (492 aa).

220–225 (GSANTG) is a binding site for NAD(+). Catalysis depends on residues Glu243 and Cys277.

It belongs to the aldehyde dehydrogenase family. AstD subfamily.

The enzyme catalyses N-succinyl-L-glutamate 5-semialdehyde + NAD(+) + H2O = N-succinyl-L-glutamate + NADH + 2 H(+). It participates in amino-acid degradation; L-arginine degradation via AST pathway; L-glutamate and succinate from L-arginine: step 4/5. Its function is as follows. Catalyzes the NAD-dependent reduction of succinylglutamate semialdehyde into succinylglutamate. This chain is N-succinylglutamate 5-semialdehyde dehydrogenase, found in Escherichia coli (strain K12 / MC4100 / BW2952).